A 134-amino-acid polypeptide reads, in one-letter code: Profilin-3 (134 aa).

The cysteines at positions 13 and 118 are disulfide-linked. The short motif at 84 to 100 (AVIRGKKGSGGITIKKT) is the Involved in PIP2 interaction element. T114 bears the Phosphothreonine mark.

The protein belongs to the profilin family. Occurs in many kinds of cells as a complex with monomeric actin in a 1:1 ratio. Post-translationally, phosphorylated by MAP kinases.

It is found in the cytoplasm. It localises to the cytoskeleton. Binds to actin and affects the structure of the cytoskeleton. At high concentrations, profilin prevents the polymerization of actin, whereas it enhances it at low concentrations. The protein is Profilin-3 of Olea europaea (Common olive).